We begin with the raw amino-acid sequence, 521 residues long: Forkhead box protein N4 (521 aa).

Positions 197–293 (KPIYSYSCLI…EEMHKWKRKD (97 aa)) form a DNA-binding region, fork-head. The segment at 371–406 (PQAHLAPDSPAPAQTPPLHALPSLSPGPLPQPAMGR) is disordered.

In terms of tissue distribution, mainly expressed in proliferator progenitor cells in brain and retina rather than differentiated cells. In contrast, is expressed only in postmitotic epithelial cells rather than in proliferative progenitors in the proximal airway.

Its subcellular location is the nucleus. Transcription factor essential for neural and some non-neural tissues development, such as retina and lung respectively. Binds to an 11-bp consensus sequence containing the invariant tetranucleotide 5'-ACGC-3'. During development of the central nervous system, is required to specify the amacrine and horizontal cell fates from multipotent retinal progenitors while suppressing the alternative photoreceptor cell fates through activating DLL4-NOTCH signaling. Also acts synergistically with ASCL1/MASH1 to activate DLL4-NOTCH signaling and drive commitment of p2 progenitors to the V2b interneuron fates during spinal cord neurogenesis. In development of non-neural tissues, plays an essential role in the specification of the atrioventricular canal and is indirectly required for patterning the distal airway during lung development. The chain is Forkhead box protein N4 (Foxn4) from Mus musculus (Mouse).